We begin with the raw amino-acid sequence, 207 residues long: Large ribosomal subunit protein uL4 (207 aa).

The protein belongs to the universal ribosomal protein uL4 family. In terms of assembly, part of the 50S ribosomal subunit.

One of the primary rRNA binding proteins, this protein initially binds near the 5'-end of the 23S rRNA. It is important during the early stages of 50S assembly. It makes multiple contacts with different domains of the 23S rRNA in the assembled 50S subunit and ribosome. Functionally, forms part of the polypeptide exit tunnel. The polypeptide is Large ribosomal subunit protein uL4 (Geobacter sulfurreducens (strain ATCC 51573 / DSM 12127 / PCA)).